The sequence spans 1648 residues: Cortactin-binding protein 2 (1648 aa).

Disordered stretches follow at residues 1–26 (MATD…TAEA), 200–250 (EEKK…EEAH), 322–439 (PLTV…PGLN), 451–476 (GNAN…PTSR), and 492–608 (ALSR…PSID). A coiled-coil region spans residues 119 to 274 (KMQERMSAQL…MEQMKKGSDG (156 aa)). Composition is skewed to basic and acidic residues over residues 200–218 (EEKK…EKQR) and 225–250 (QLEK…EEAH). Composition is skewed to polar residues over residues 330–342 (STGS…NTKG) and 372–392 (LPSS…APDL). A compositionally biased stretch (low complexity) spans 393-415 (SNSTPSTPSSTAPAAAQTPGTAP). A compositionally biased stretch (polar residues) spans 492–503 (ALSRFTSPQAGA). Arg495 carries the post-translational modification Asymmetric dimethylarginine. 6 ANK repeats span residues 699-729 (GRPT…DINY), 733-762 (DGHS…RVDA), 766-795 (NGFT…NINH), 799-828 (GGQT…DRSI), 832-861 (DGWT…RAHG), and 901-931 (EGWT…EPER). Residues 1438–1492 (SGAWRKVNTSPRKKPGHFSSPTWNKPDPKREGMRNKTIPHLNTNRNSSLSKQQSL) are disordered. Residues 1477 to 1492 (HLNTNRNSSLSKQQSL) are compositionally biased toward polar residues. Ser1510 is subject to Phosphoserine. The tract at residues 1522–1648 (SMCSSKSESD…KHEQVEKPNK (127 aa)) is disordered. The segment covering 1528–1547 (SESDISKIADSRDDLRKFDS) has biased composition (basic and acidic residues). Composition is skewed to polar residues over residues 1548-1557 (SRTNPGTSAP) and 1571-1584 (PPSS…SNSK). The span at 1609-1623 (SQNTKRNSSSSNTRQ) shows a compositional bias: low complexity. Residues 1630–1648 (SKEENWTLDKHEQVEKPNK) are compositionally biased toward basic and acidic residues.

In terms of assembly, interacts with CTTN/cortactin SH3 domain. Interacts with STRN, STRN4/zinedin and MOB4/phocein; this interactions mediate the association with the STRIPAK core complex and may regulate dendritic spine distribution of the STRIPAK complex in hippocampal neurons. Activation of glutamate receptors weakens the interaction with STRN and STRN4. In terms of tissue distribution, isoform 2 is predominantly expressed in brain (at protein level). In the brain, expressed at high levels in hypothalamus and striatum and at lower levels in cerebellum and cortex.

Its subcellular location is the cytoplasm. The protein localises to the cell cortex. The protein resides in the cell projection. It is found in the dendritic spine. In terms of biological role, regulates the dendritic spine distribution of CTTN/cortactin in hippocampal neurons, and thus controls dendritic spinogenesis and dendritic spine maintenance. Associates with the striatin-interacting phosphatase and kinase (STRIPAK) core complex to regulate dendritic spine distribution of the STRIPAK complex in hippocampal neurons. The sequence is that of Cortactin-binding protein 2 (Cttnbp2) from Mus musculus (Mouse).